We begin with the raw amino-acid sequence, 100 residues long: Aspartyl/glutamyl-tRNA(Asn/Gln) amidotransferase subunit C (100 aa).

Belongs to the GatC family. As to quaternary structure, heterotrimer of A, B and C subunits.

It carries out the reaction L-glutamyl-tRNA(Gln) + L-glutamine + ATP + H2O = L-glutaminyl-tRNA(Gln) + L-glutamate + ADP + phosphate + H(+). The enzyme catalyses L-aspartyl-tRNA(Asn) + L-glutamine + ATP + H2O = L-asparaginyl-tRNA(Asn) + L-glutamate + ADP + phosphate + 2 H(+). Allows the formation of correctly charged Asn-tRNA(Asn) or Gln-tRNA(Gln) through the transamidation of misacylated Asp-tRNA(Asn) or Glu-tRNA(Gln) in organisms which lack either or both of asparaginyl-tRNA or glutaminyl-tRNA synthetases. The reaction takes place in the presence of glutamine and ATP through an activated phospho-Asp-tRNA(Asn) or phospho-Glu-tRNA(Gln). The protein is Aspartyl/glutamyl-tRNA(Asn/Gln) amidotransferase subunit C of Streptococcus agalactiae serotype III (strain NEM316).